The primary structure comprises 517 residues: Nucleoside transporter FUN26 (517 aa).

Residues M1–P63 form a disordered region. Basic and acidic residues predominate over residues T25–H44. Residues S45 and S58 each carry the phosphoserine modification. 11 consecutive transmembrane segments (helical) span residues L76–L96, I116–L136, L151–L171, W174–T194, M214–I234, G243–F263, L344–A364, V367–L387, T411–I431, I446–I466, and I492–I512.

It belongs to the SLC29A/ENT transporter (TC 2.A.57) family.

It localises to the membrane. Functionally, has broad nucleoside selectivity (uridine, adenosine and cytidine) and most likely functions to transport nucleosides across intracellular membranes. This chain is Nucleoside transporter FUN26 (FUN26), found in Saccharomyces cerevisiae (strain ATCC 204508 / S288c) (Baker's yeast).